The sequence spans 249 residues: 5'-nucleotidase SurE (249 aa).

The a divalent metal cation site is built by Asp-9, Asp-10, Ser-40, and Asn-92.

Belongs to the SurE nucleotidase family. The cofactor is a divalent metal cation.

Its subcellular location is the cytoplasm. The catalysed reaction is a ribonucleoside 5'-phosphate + H2O = a ribonucleoside + phosphate. Its function is as follows. Nucleotidase that shows phosphatase activity on nucleoside 5'-monophosphates. In Shewanella baltica (strain OS195), this protein is 5'-nucleotidase SurE.